A 686-amino-acid polypeptide reads, in one-letter code: DNA topoisomerase 1 (686 aa).

The Toprim domain occupies 1-141; sequence MILIIAEKPN…KRMKFSALTK (141 aa). Glutamate 7 and aspartate 107 together coordinate Mg(2+). A Topo IA-type catalytic domain is found at 156 to 574; that stretch reads NFGMANAGIA…EAKERLTKIL (419 aa). An interaction with DNA region spans residues 196–201; it reads STGRVQ. Catalysis depends on tyrosine 317, which acts as the O-(5'-phospho-DNA)-tyrosine intermediate. The C4-type 1 zinc-finger motif lies at 606–634; the sequence is CPKCGGDLIVKYNKKTGKRFVGCSNWPKC. A C4-type 2; atypical zinc finger spans residues 653–678; the sequence is CCNGAPVVIIREEDGREFEICLDINC.

Belongs to the type IA topoisomerase family. In terms of assembly, monomer. It depends on Mg(2+) as a cofactor.

It catalyses the reaction ATP-independent breakage of single-stranded DNA, followed by passage and rejoining.. In terms of biological role, releases the supercoiling and torsional tension of DNA, which is introduced during the DNA replication and transcription, by transiently cleaving and rejoining one strand of the DNA duplex. Introduces a single-strand break via transesterification at a target site in duplex DNA. The scissile phosphodiester is attacked by the catalytic tyrosine of the enzyme, resulting in the formation of a DNA-(5'-phosphotyrosyl)-enzyme intermediate and the expulsion of a 3'-OH DNA strand. The free DNA strand then undergoes passage around the unbroken strand, thus removing DNA supercoils. Finally, in the religation step, the DNA 3'-OH attacks the covalent intermediate to expel the active-site tyrosine and restore the DNA phosphodiester backbone. This Pyrococcus horikoshii (strain ATCC 700860 / DSM 12428 / JCM 9974 / NBRC 100139 / OT-3) protein is DNA topoisomerase 1.